A 93-amino-acid chain; its full sequence is Small ribosomal subunit protein uS19 (93 aa).

Belongs to the universal ribosomal protein uS19 family.

In terms of biological role, protein S19 forms a complex with S13 that binds strongly to the 16S ribosomal RNA. This is Small ribosomal subunit protein uS19 from Geobacter sulfurreducens (strain ATCC 51573 / DSM 12127 / PCA).